The sequence spans 232 residues: 7-cyano-7-deazaguanine synthase (232 aa).

Residue 7–17 coordinates ATP; that stretch reads LSGGLDSTVVT. Cys-195, Cys-206, Cys-209, and Cys-212 together coordinate Zn(2+).

It belongs to the QueC family. It depends on Zn(2+) as a cofactor.

It catalyses the reaction 7-carboxy-7-deazaguanine + NH4(+) + ATP = 7-cyano-7-deazaguanine + ADP + phosphate + H2O + H(+). It participates in purine metabolism; 7-cyano-7-deazaguanine biosynthesis. In terms of biological role, catalyzes the ATP-dependent conversion of 7-carboxy-7-deazaguanine (CDG) to 7-cyano-7-deazaguanine (preQ(0)). The chain is 7-cyano-7-deazaguanine synthase from Methanocaldococcus jannaschii (strain ATCC 43067 / DSM 2661 / JAL-1 / JCM 10045 / NBRC 100440) (Methanococcus jannaschii).